Consider the following 172-residue polypeptide: Co-chaperone protein HscB homolog (172 aa).

Residues 2 to 74 (NHFELFGLVE…LRRAEYLLSL (73 aa)) form the J domain.

The protein belongs to the HscB family. In terms of assembly, interacts with HscA and stimulates its ATPase activity.

Functionally, co-chaperone involved in the maturation of iron-sulfur cluster-containing proteins. Seems to help targeting proteins to be folded toward HscA. This is Co-chaperone protein HscB homolog from Aeromonas salmonicida (strain A449).